Reading from the N-terminus, the 344-residue chain is N-acetyl-gamma-glutamyl-phosphate reductase (344 aa).

The active site involves Cys149.

Belongs to the NAGSA dehydrogenase family. Type 1 subfamily.

The protein resides in the cytoplasm. The enzyme catalyses N-acetyl-L-glutamate 5-semialdehyde + phosphate + NADP(+) = N-acetyl-L-glutamyl 5-phosphate + NADPH + H(+). It participates in amino-acid biosynthesis; L-arginine biosynthesis; N(2)-acetyl-L-ornithine from L-glutamate: step 3/4. Catalyzes the NADPH-dependent reduction of N-acetyl-5-glutamyl phosphate to yield N-acetyl-L-glutamate 5-semialdehyde. The polypeptide is N-acetyl-gamma-glutamyl-phosphate reductase (Shouchella clausii (strain KSM-K16) (Alkalihalobacillus clausii)).